The primary structure comprises 609 residues: Rhotekin-2 (609 aa).

The REM-1 domain occupies 5–81 (SLRGPALRLA…LQKLEEQIAN (77 aa)). Residues 56–91 (KNLMVCNARLMAYTSELQKLEEQIANQTGRCDVKFE) are a coiled coil. One can recognise a PH domain in the interval 286–393 (EDAFAGFLNQ…WMEAFWQHFF (108 aa)). Disordered regions lie at residues 495–520 (HDEKGKKRQAPLPPSDKLPFSLKSQS) and 554–609 (KPMA…QAQV). A compositionally biased stretch (basic and acidic residues) spans 569 to 582 (RLSDGEHTDTKTNF).

As to expression, expressed in lymphocytes, CD4 positive T-cells and bone marrow-derived cells. Also expressed in lung, colon, thymus and brain.

In terms of biological role, may play an important role in lymphopoiesis. The protein is Rhotekin-2 (RTKN2) of Homo sapiens (Human).